Reading from the N-terminus, the 363-residue chain is Protein-glutamate methylesterase/protein-glutamine glutaminase of group 3 operon (363 aa).

The 118-residue stretch at 7–124 folds into the Response regulatory domain; it reads RVLIVDDSAS…RQALMESSGR (118 aa). Position 58 is a 4-aspartylphosphate (Asp58). The region spanning 166 to 357 is the CheB-type methylesterase domain; the sequence is PTTERIVCIG…REIMAWQQAK (192 aa). Residues Ser177, His203, and Asp299 contribute to the active site.

The protein belongs to the CheB family. Post-translationally, phosphorylated by CheA. Phosphorylation of the N-terminal regulatory domain activates the methylesterase activity.

It is found in the cytoplasm. The enzyme catalyses [protein]-L-glutamate 5-O-methyl ester + H2O = L-glutamyl-[protein] + methanol + H(+). The catalysed reaction is L-glutaminyl-[protein] + H2O = L-glutamyl-[protein] + NH4(+). Its function is as follows. Involved in chemotaxis. Part of a chemotaxis signal transduction system that modulates chemotaxis in response to various stimuli. Catalyzes the demethylation of specific methylglutamate residues introduced into the chemoreceptors (methyl-accepting chemotaxis proteins or MCP) by CheR. Also mediates the irreversible deamidation of specific glutamine residues to glutamic acid. The protein is Protein-glutamate methylesterase/protein-glutamine glutaminase of group 3 operon of Rhodopseudomonas palustris (strain ATCC BAA-98 / CGA009).